The following is a 642-amino-acid chain: AEKIKICLQKQANSSFSLHNGFGGNLYATEEKRMFELVKPKAGASVLNQSTWIGFGDSRTDKSNSAFPRSADVSAKTADKFRSLSGGSLMLSMFGPPGKVDYLYQGCGKHKVFYEGVNWSPHAAIDCYRKNWTDIKLNFQKNIYELASQSHCMSLVNALDKTIPLQVTAEVAKNCNNSFLKNPALYTQEVNPSKQICGEENLAFFTLPTQFGTYECKLHLVASCYFIYDSKEVYNKRGCDNYFQVIYDSSGKVVGGLDNRVSPYTGNTGDTPTMQCDMLQLKPGRYSVRSSPRFLLMPERSYCFDMKEKGLVTAVQSVWGKGRKSDYAVDQACLSTPGCMLIQKQKPYIGEADDHHGDQEMRELLSGLDYEARCISQSGWVNETSPFTEEYLLPPKFGRCPLAAKEESIPKIPDGLLIPTSGTDTTVTKPKSRIFGNDDLIIGLLFVAIVETGIGGYLLGSRKESGGGVTKESAEKGFEKIGNDIQILRSSTNIAIEKLNDRITHDEQAIRDLTLEIENARSEALLGELGIIRALLVGNISIGLQESLWELASEITNRAGDLAVEVSPGCWIIDNNICDQSCQNFIFKFNETAPVPTIPPLDTKIDLQSDPFYWGSSLGLAITTPISLAALAISGIAICRTK.

Residue Ala-1 is a signal peptide. The tract at residues 2 to 27 is fusion domain-1; the sequence is EKIKICLQKQANSSFSLHNGFGGNLY. The Extracellular segment spans residues 2–617; it reads EKIKICLQKQ…QSDPFYWGSS (616 aa). Intrachain disulfides connect Cys-7–Cys-570, Cys-107–Cys-152, Cys-127–Cys-175, Cys-197–Cys-239, Cys-216–Cys-303, Cys-224–Cys-276, and Cys-333–Cys-339. Residues Asn-13 and Asn-48 are each glycosylated (N-linked (GlcNAc...) asparagine; by host). The esterase domain-1 stretch occupies residues 28-138; that stretch reads ATEEKRMFEL…RKNWTDIKLN (111 aa). Ser-58 acts as the Nucleophile in catalysis. Asn-131 carries N-linked (GlcNAc...) asparagine; by host glycosylation. The tract at residues 138 to 297 is N-acetyl-9-O-acetylneuraminic acid binding; sequence NFQKNIYELA…VRSSPRFLLM (160 aa). The tract at residues 298–352 is esterase domain-2; that stretch reads PERSYCFDMKEKGLVTAVQSVWGKGRKSDYAVDQACLSTPGCMLIQKQKPYIGEA. Active-site charge relay system residues include Asp-353 and His-356. The interval 353–638 is fusion domain-2; it reads DDHHGDQEMR…AALAISGIAI (286 aa). Residue Asn-382 is glycosylated (N-linked (GlcNAc...) asparagine; by host). A helical membrane pass occupies residues 618 to 638; the sequence is LGLAITTPISLAALAISGIAI. Residues 639-642 lie on the Cytoplasmic side of the membrane; the sequence is CRTK.

Belongs to the influenza type C/coronaviruses hemagglutinin-esterase family. In terms of assembly, homotrimer of disulfide-linked HEF1-HEF2. In natural infection, inactive HEF is matured into HEF1 and HEF2 outside the cell by one or more trypsin-like, arginine-specific endoprotease.

It is found in the virion membrane. It localises to the host cell membrane. The catalysed reaction is N-acetyl-9-O-acetylneuraminate + H2O = N-acetylneuraminate + acetate + H(+). It catalyses the reaction N-acetyl-4-O-acetylneuraminate + H2O = N-acetylneuraminate + acetate + H(+). In terms of biological role, binds to the N-acetyl-9-O-acetylneuraminic acid residues on the cell surface, bringing about the attachment of the virus particle to the cell. Plays a major role in the determination of host range restriction and virulence. Class I viral fusion protein. Responsible for penetration of the virus into the cell cytoplasm by mediating the fusion of the membrane of the endocytosed virus particle with the endosomal membrane. Low pH in endosomes induce an irreversible conformational change in HEF2, releasing the fusion hydrophobic peptide. Several trimers are required to form a competent fusion pore. Displays a receptor-destroying activity which is a neuraminidate-O-acetyl esterase. This activity cleaves off any receptor on the cell surface, which would otherwise prevent virions release. These cleavages prevent self-aggregation and ensure the efficient spread of the progeny virus from cell to cell. The polypeptide is Hemagglutinin-esterase-fusion glycoprotein (HE) (Influenza C virus (strain C/Great lakes/1167/1954)).